Here is a 122-residue protein sequence, read N- to C-terminus: uncharacterized protein (122 aa).

Transmembrane regions (helical) follow at residues 36–56 and 72–92; these read SVRS…YSQF and AVFL…FSTD.

Its subcellular location is the membrane. This is an uncharacterized protein from Saccharomyces cerevisiae (strain ATCC 204508 / S288c) (Baker's yeast).